The following is a 1141-amino-acid chain: Serine-aspartate repeat-containing protein E (1141 aa).

The first 52 residues, methionine 1–alanine 52, serve as a signal peptide directing secretion. Residues phenylalanine 23–serine 34 carry the YSIRK-G/S signaling motif motif. Positions alanine 53–lysine 601 are ligand binding A region. Positions glutamate 54 to proline 248 are disordered. A compositionally biased stretch (basic and acidic residues) spans alanine 61–valine 75. A compositionally biased stretch (low complexity) spans glutamate 77–asparagine 90. Basic and acidic residues predominate over residues isoleucine 92–serine 108. Over residues threonine 109–threonine 126 the composition is skewed to low complexity. Positions asparagine 130–threonine 145 are enriched in basic and acidic residues. The segment covering asparagine 159 to threonine 207 has biased composition (polar residues). The span at serine 216–threonine 241 shows a compositional bias: basic and acidic residues. CNA-B domains lie at leucine 602–proline 714, lysine 715–proline 824, and lysine 825–threonine 935. Positions glycine 929–alanine 1117 are disordered. A compositionally biased stretch (acidic residues) spans tyrosine 930–serine 1080. Residues leucine 1104–glycine 1108 carry the LPXTG sorting signal motif. The residue at position 1107 (threonine 1107) is a Pentaglycyl murein peptidoglycan amidated threonine. A propeptide spans glycine 1108–lysine 1141 (removed by sortase).

Belongs to the serine-aspartate repeat-containing protein (SDr) family. In terms of assembly, interacts with host complement factor H/CFAH (via C-terminus). Interacts with host complement regulator C4BPA.

The protein resides in the secreted. The protein localises to the cell wall. Its function is as follows. Cell surface-associated calcium-binding protein which plays an important role in adhesion and pathogenesis. Contributes to the resistance to killing by innate immune components in blood and thus attenuates bacterial clearance by interacting with host complement factor H/CFAH and modulating its activity. Inhibits also bacterial opsonization and killing by interacting with host complement regulator C4BPA and thus inhibiting classical complement pathway activation. In Staphylococcus aureus (strain Mu50 / ATCC 700699), this protein is Serine-aspartate repeat-containing protein E (sdrE).